The following is a 183-amino-acid chain: RFKKIRRLGALPGLTSKRPRSGSDLKNQLRSGKRSQYRIRLEEKQKLRFHYGLTERQLLKYVHIAGKAKGSTGQILLQLLEMRLDNILFRLGMASTIPGARQLVNHRHILVNGRIVDIPSYRCKPRDIITTKNKQRSKALIQNFIASSPQQEELPNHLTIDPFQYKGLVNQIIDSKWIGLKIN.

The 62-residue stretch at 82–143 folds into the S4 RNA-binding domain; it reads MRLDNILFRL…KQRSKALIQN (62 aa).

Belongs to the universal ribosomal protein uS4 family. As to quaternary structure, part of the 30S ribosomal subunit. Contacts protein S5. The interaction surface between S4 and S5 is involved in control of translational fidelity.

It is found in the plastid. The protein resides in the chloroplast. Functionally, one of the primary rRNA binding proteins, it binds directly to 16S rRNA where it nucleates assembly of the body of the 30S subunit. With S5 and S12 plays an important role in translational accuracy. The protein is Small ribosomal subunit protein uS4c (rps4) of Schizorhiza neglecta (Lapeirousia neglecta).